Reading from the N-terminus, the 183-residue chain is Dual-action ribosomal maturation protein DarP (183 aa).

The protein belongs to the DarP family.

It is found in the cytoplasm. In terms of biological role, member of a network of 50S ribosomal subunit biogenesis factors which assembles along the 30S-50S interface, preventing incorrect 23S rRNA structures from forming. Promotes peptidyl transferase center (PTC) maturation. This Shigella boydii serotype 18 (strain CDC 3083-94 / BS512) protein is Dual-action ribosomal maturation protein DarP.